We begin with the raw amino-acid sequence, 550 residues long: Leucine-rich repeat LGI family member 2 (550 aa).

The N-terminal stretch at 1-25 (MALWRGGGALGLLLLSAACLIPPSA) is a signal peptide. In terms of domain architecture, LRRNT spans 26–62 (QVRRLARCPATCSCTKESIICVGSSWVPRIVPGDISS). Asn-67 is a glycosylation site (N-linked (GlcNAc...) asparagine). LRR repeat units lie at residues 83-104 (SLQL…AFAG) and 107-128 (HLEY…AFRG). The 51-residue stretch at 140-190 (NKFECDCKAKWLYLWLKMTNSTVSDVLCIGPPEYQEKKLNEVTSFDYECTT) folds into the LRRCT domain. Residue Asn-159 is glycosylated (N-linked (GlcNAc...) asparagine). EAR repeat units lie at residues 224-266 (DFVV…EWDH), 270-312 (NFRS…KYDE), 316-363 (KFVK…KWNS), 365-408 (GFYS…QWNK), 412-455 (KFVP…RWNS), 457-499 (QFVE…QWDK), and 503-545 (QFKK…EHII). A glycan (N-linked (GlcNAc...) asparagine) is linked at Asn-276. Asn-407 carries an N-linked (GlcNAc...) asparagine glycan.

As to expression, brain.

The protein localises to the secreted. In terms of biological role, required for the development of soma-targeting inhibitory GABAergic synapses made by parvalbumin-positive basket cells. In Mus musculus (Mouse), this protein is Leucine-rich repeat LGI family member 2 (Lgi2).